Reading from the N-terminus, the 408-residue chain is Heparan-sulfate 6-O-sulfotransferase 1 (408 aa).

Residues 8-14 (MVERTSK) are Cytoplasmic-facing. A helical; Signal-anchor for type II membrane protein transmembrane segment spans residues 15–35 (FLLIVAASVCFMLILYQYVGP). The Lumenal portion of the chain corresponds to 36-408 (GLSLGAPSGR…DYMSHIIEKW (373 aa)). Position 90-98 (90-98 (HIQKTGGTT)) interacts with 3'-phosphoadenylyl sulfate. Substrate is bound by residues 120–121 (KK), Arg137, Trp142, and His147. The active-site Proton acceptor is the His147. Residues Arg182 and Ser190 each contribute to the 3'-phosphoadenylyl sulfate site. Substrate-binding residues include His194 and Trp201. Residue Asn261 is glycosylated (N-linked (GlcNAc...) asparagine). Residue 314–316 (MQY) coordinates 3'-phosphoadenylyl sulfate. N-linked (GlcNAc...) asparagine glycosylation is present at Asn317. 320 to 321 (RA) is a binding site for 3'-phosphoadenylyl sulfate. A glycan (N-linked (GlcNAc...) asparagine) is linked at Asn328. Residues 348 to 382 (AKDLFQQRYQYKRQLERMEQRIKNREERLLHRSNE) adopt a coiled-coil conformation. Residues 376 to 396 (LLHRSNEALPKEETEEQGRLP) are disordered.

This sequence belongs to the sulfotransferase 6 family. N-glycosylated.

Its subcellular location is the membrane. It carries out the reaction alpha-D-glucosaminyl-[heparan sulfate](n) + 3'-phosphoadenylyl sulfate = 6-sulfo-alpha-D-glucosaminyl-[heparan sulfate](n) + adenosine 3',5'-bisphosphate + H(+). 6-O-sulfation enzyme which catalyzes the transfer of sulfate from 3'-phosphoadenosine 5'-phosphosulfate (PAPS) to position 6 of the N-sulfoglucosamine residue (GlcNS) of heparan sulfate. May also play a role in limb development. This Gallus gallus (Chicken) protein is Heparan-sulfate 6-O-sulfotransferase 1.